A 418-amino-acid polypeptide reads, in one-letter code: N-acetylglucosamine-6-phosphate deacetylase (418 aa).

Residue Glu154 participates in a divalent metal cation binding. Cys165–His166 provides a ligand contact to substrate. His223 and His244 together coordinate a divalent metal cation. Substrate contacts are provided by residues Asn247–Ala248, Arg255, and Asp281–His284. The active-site Proton donor/acceptor is Asp306. Substrate is bound at residue Thr340–Gly342.

Belongs to the metallo-dependent hydrolases superfamily. NagA family. Requires a divalent metal cation as cofactor.

The enzyme catalyses N-acetyl-D-glucosamine 6-phosphate + H2O = D-glucosamine 6-phosphate + acetate. This is N-acetylglucosamine-6-phosphate deacetylase from Caenorhabditis elegans.